The primary structure comprises 252 residues: MTTSWVLQSKDLSNTDLVHIAKLAEQAERYDDMAAAMKRYTEASGNLGNEERNLLSVAYKNVVGARRSAWRVIHGSEMKAVNDRTKKQIAEEYRIKMEKELNTICNQVLALLEDYLLPNASPDDSKVFFLKMQGDYYRYLAEVATDDARTEVVQKSLDAYTKATTAAENLPTTHPIRLGLALNFSVFFYEIQNDAAKACELAKSAFDSAIAELDQLQDDSYKDSTLIMQLLRDNLTLWASDQTAEGDVENDS.

Belongs to the 14-3-3 family.

The chain is 14-3-3 protein homolog 1 from Schistosoma mansoni (Blood fluke).